Reading from the N-terminus, the 114-residue chain is Secretoglobin family 2B member 2 (114 aa).

Residues 1–23 form the signal peptide; it reads MKGTLLLLALLVTGELGFQRTEA.

This sequence belongs to the secretoglobin family. As to expression, expressed in lacrimal gland.

It localises to the secreted. This chain is Secretoglobin family 2B member 2 (Scgb2b2), found in Mus musculus (Mouse).